Reading from the N-terminus, the 245-residue chain is ATP synthase subunit a (245 aa).

Transmembrane regions (helical) follow at residues 5–25 (LWFT…MMSV), 37–57 (ISNY…FFIA), 99–119 (YIVT…IPGF), 125–145 (FPSV…VHGL), 157–177 (FLGP…CSHF), 187–209 (LYAN…PLGF), and 221–241 (SLIQ…EATA).

It belongs to the ATPase A chain family. As to quaternary structure, F-type ATPases have 2 components, CF(1) - the catalytic core - and CF(0) - the membrane proton channel. CF(1) has five subunits: alpha(3), beta(3), gamma(1), delta(1), epsilon(1). CF(0) has three main subunits: a(1), b(2) and c(9-12). The alpha and beta chains form an alternating ring which encloses part of the gamma chain. CF(1) is attached to CF(0) by a central stalk formed by the gamma and epsilon chains, while a peripheral stalk is formed by the delta and b chains.

The protein localises to the cell inner membrane. Functionally, key component of the proton channel; it plays a direct role in the translocation of protons across the membrane. The sequence is that of ATP synthase subunit a from Koribacter versatilis (strain Ellin345).